The primary structure comprises 307 residues: Tyrosine recombinase XerC (307 aa).

Positions 9 to 95 (ETLSLAIDSF…ALRSFLDWQV (87 aa)) constitute a Core-binding (CB) domain. Residues 116 to 296 (HLPKNMDVDE…DFQHLAKVYD (181 aa)) form the Tyr recombinase domain. Active-site residues include Arg155, Lys179, His248, Arg251, and His274. Tyr283 (O-(3'-phospho-DNA)-tyrosine intermediate) is an active-site residue.

The protein belongs to the 'phage' integrase family. XerC subfamily. As to quaternary structure, forms a cyclic heterotetrameric complex composed of two molecules of XerC and two molecules of XerD, in which XerC interacts with XerD via its C-terminal region, XerD interacts with XerC via its C-terminal region and so on.

It is found in the cytoplasm. FtsK may regulate the catalytic switch between XerC and XerD in the heterotetrameric complex during the two steps of the recombination process. Its function is as follows. Site-specific tyrosine recombinase, which acts by catalyzing the cutting and rejoining of the recombining DNA molecules. Binds cooperatively to specific DNA consensus sequences that are separated from XerD binding sites by a short central region, forming the heterotetrameric XerC-XerD complex that recombines DNA substrates. The complex is essential to convert dimers of the bacterial chromosome into monomers to permit their segregation at cell division. It also contributes to the segregational stability of plasmids. In the complex XerC specifically exchanges the top DNA strands. In Proteus mirabilis, this protein is Tyrosine recombinase XerC.